Consider the following 990-residue polypeptide: MAEAERPAGKEYTTISEVSGPLMVVEGVEGAKYGEVVEVETPTGEVRRGQVLEARRDAAVVQVFEGTSGLDTTSTKVRFTGETLRIPVSTDLLGRILNGRGEPIDGGPEIVPEDELDIHGAPINPAARKYPSDFIQTGISAIDGMNTLVRGQKLPIFSGSGLPHNELAAQIARQATVPGEEEEFAVVFAAMGITHEEAAFFRREFEETGALDRAVLILNLADDPSMERIITPRIALTVAEYLAFENDMHVLVILTDMTNYCFAPGTRVITASGDVVEIDEIVERAAETAVDGGLREGSTEVTVGVTNVRTLAAWDGDLTSNDVVAVEKIEAPSRAVRVRTRSGAELVVSEDHKFLVDTEDGPRMVEASELKSGDELYSVRELRVSEKVPTYLELLLEAEDKFYVHPTEEFEEAVAERYGSLAEACREKELPYRAREAKERRYYELSEFARLATAVIESVDEATEYIDYVTAGGRKRVKFSSPRPGKEVMYVAGLIASDGSVDTERGFVMFSNTERELLSAFEEIVTEEFGVDASKTENQNGVTMLRVNSRVLARVFERLADPKTVLKMPRELVAAYLAGYVDGDGHLKDGKIVITTADRERAGDLQLLLKRLGVPSVLRERDGAYDVVVTGHDAAELAEELPLRHPKKAEAAASMSSGRRSSRFDRVSRRFGRLLREVRRKYGVRASDLGSSSTISQIESGERRATRRLALEIVERLEEVVGDVEEVRELRELAEGNYVLDEVVEVETVEYEHEYLYDVTVVPDHTLVVENGIITSNCEALREISAAREEVPGRRGYPGYMYTDLATIYERAGCIRGRKGSITQMPILTMPHDDITHPIPDLTGYITEGQIVLSRDLHRRGIYPPIDVLPSLSRLMDEGIGKGKTREDHPDLSNQLYAAYAEGRDLRDLVAVVGEEALTERDRKFLKFADEFEQRFVKQGRDENRSIEETLDLGWELLAILPERELKRVSDELIEKYHPKYRQKKEEQEE.

One can recognise a DOD-type homing endonuclease domain in the interval 491–614; the sequence is VAGLIASDGS…LQLLLKRLGV (124 aa).

This sequence belongs to the ATPase alpha/beta chains family. In terms of assembly, has multiple subunits with at least A(3), B(3), C, D, E, F, H, I and proteolipid K(x). Post-translationally, this protein undergoes a protein self splicing that involves a post-translational excision of the VDE intervening region (intein) followed by peptide ligation.

The protein resides in the cell membrane. Component of the A-type ATP synthase that produces ATP from ADP in the presence of a proton gradient across the membrane. The B chain is a regulatory subunit. The protein is A-type ATP synthase subunit B of Methanopyrus kandleri (strain AV19 / DSM 6324 / JCM 9639 / NBRC 100938).